The following is a 279-amino-acid chain: Diaminopimelate epimerase (279 aa).

Substrate contacts are provided by Asn13 and Asn66. Cys75 (proton donor) is an active-site residue. Residues 76–77 (GN), Asn162, Asn195, and 213–214 (ER) each bind substrate. Cys222 (proton acceptor) is an active-site residue. A substrate-binding site is contributed by 223–224 (GT).

Belongs to the diaminopimelate epimerase family. Homodimer.

It is found in the cytoplasm. It carries out the reaction (2S,6S)-2,6-diaminopimelate = meso-2,6-diaminopimelate. It participates in amino-acid biosynthesis; L-lysine biosynthesis via DAP pathway; DL-2,6-diaminopimelate from LL-2,6-diaminopimelate: step 1/1. Functionally, catalyzes the stereoinversion of LL-2,6-diaminopimelate (L,L-DAP) to meso-diaminopimelate (meso-DAP), a precursor of L-lysine and an essential component of the bacterial peptidoglycan. The polypeptide is Diaminopimelate epimerase (Synechocystis sp. (strain ATCC 27184 / PCC 6803 / Kazusa)).